Here is a 97-residue protein sequence, read N- to C-terminus: Exodeoxyribonuclease 7 small subunit (97 aa).

The tract at residues methionine 1 to asparagine 22 is disordered.

Belongs to the XseB family. In terms of assembly, heterooligomer composed of large and small subunits.

Its subcellular location is the cytoplasm. The enzyme catalyses Exonucleolytic cleavage in either 5'- to 3'- or 3'- to 5'-direction to yield nucleoside 5'-phosphates.. In terms of biological role, bidirectionally degrades single-stranded DNA into large acid-insoluble oligonucleotides, which are then degraded further into small acid-soluble oligonucleotides. This Burkholderia lata (strain ATCC 17760 / DSM 23089 / LMG 22485 / NCIMB 9086 / R18194 / 383) protein is Exodeoxyribonuclease 7 small subunit.